Here is a 253-residue protein sequence, read N- to C-terminus: Dihydroanticapsin 7-dehydrogenase (253 aa).

NAD(+) is bound at residue Leu-9–Asn-31. Substrate is bound at residue Ser-139. Tyr-152 (proton acceptor) is an active-site residue.

It belongs to the short-chain dehydrogenases/reductases (SDR) family.

It carries out the reaction L-dihydroanticapsin + NAD(+) = L-anticapsin + NADH + H(+). It functions in the pathway antibiotic biosynthesis; bacilysin biosynthesis. In terms of biological role, part of the bacABCDEFG operon responsible for the biosynthesis of bacilysin, an irreversible inactivator of the glutaminase domain of glucosamine synthetase. Catalyzes the dehydrogenation of the C7-hydroxyl group in the 4S-tetrahydrotyrosine (4S-H4Tyr) to yield anticapsin (epoxycyclohexanonyl-Ala). It is not able to oxidize the 4R-H4Tyr diastereomer and the dihydrobacilysin dipeptide (L-Ala-4S-H4Tyr dipeptide). The polypeptide is Dihydroanticapsin 7-dehydrogenase (Bacillus subtilis (strain 168)).